Consider the following 201-residue polypeptide: Recombination protein RecR (201 aa).

The C4-type zinc-finger motif lies at 57 to 72 (CTHCRTFTEEESCAIC). The Toprim domain occupies 81–176 (GFLCVVEQPS…KVSRIAHGIP (96 aa)).

This sequence belongs to the RecR family.

Functionally, may play a role in DNA repair. It seems to be involved in an RecBC-independent recombinational process of DNA repair. It may act with RecF and RecO. This Histophilus somni (strain 2336) (Haemophilus somnus) protein is Recombination protein RecR.